A 294-amino-acid polypeptide reads, in one-letter code: 2-oxoglutaramate amidase (294 aa).

The CN hydrolase domain maps to 16 to 261; that stretch reads LDVAAVQVKF…EAVLRATLNF (246 aa). The Proton acceptor role is filled by glutamate 55. Residue lysine 129 is the Proton donor of the active site. Residue cysteine 168 is the Nucleophile of the active site.

The protein belongs to the carbon-nitrogen hydrolase superfamily. NIT1/NIT2 family.

It catalyses the reaction 2-oxoglutaramate + H2O = 2-oxoglutarate + NH4(+). It participates in alkaloid degradation; nicotine degradation. In terms of biological role, catalyzes the conversion of 2-oxoglutaramate to 2-oxoglutarate. Together with glutamate dehydrogenase, may form a physiologically relevant enzyme couple, leading to transformation of metabolically inert 2-oxoglutaramate derived from trihydroxypyridine into glutamate, a central compound of nitrogen metabolism. The polypeptide is 2-oxoglutaramate amidase (Paenarthrobacter nicotinovorans (Arthrobacter nicotinovorans)).